We begin with the raw amino-acid sequence, 85 residues long: ATP synthase subunit c (85 aa).

2 consecutive transmembrane segments (helical) span residues 10–30 and 53–73; these read IAVALLIGLGALGTAIGFGLL and FIVAGLLDAVTMIGVGIALFF.

This sequence belongs to the ATPase C chain family. In terms of assembly, F-type ATPases have 2 components, F(1) - the catalytic core - and F(0) - the membrane proton channel. F(1) has five subunits: alpha(3), beta(3), gamma(1), delta(1), epsilon(1). F(0) has three main subunits: a(1), b(2) and c(10-14). The alpha and beta chains form an alternating ring which encloses part of the gamma chain. F(1) is attached to F(0) by a central stalk formed by the gamma and epsilon chains, while a peripheral stalk is formed by the delta and b chains.

Its subcellular location is the cell inner membrane. Its function is as follows. F(1)F(0) ATP synthase produces ATP from ADP in the presence of a proton or sodium gradient. F-type ATPases consist of two structural domains, F(1) containing the extramembraneous catalytic core and F(0) containing the membrane proton channel, linked together by a central stalk and a peripheral stalk. During catalysis, ATP synthesis in the catalytic domain of F(1) is coupled via a rotary mechanism of the central stalk subunits to proton translocation. In terms of biological role, key component of the F(0) channel; it plays a direct role in translocation across the membrane. A homomeric c-ring of between 10-14 subunits forms the central stalk rotor element with the F(1) delta and epsilon subunits. In Pseudomonas aeruginosa (strain LESB58), this protein is ATP synthase subunit c.